Reading from the N-terminus, the 161-residue chain is Cyclic pyranopterin monophosphate synthase (161 aa).

Substrate is bound by residues 75 to 77 (LCH) and 113 to 114 (ME). Asp-128 is a catalytic residue.

This sequence belongs to the MoaC family. Homohexamer; trimer of dimers.

It carries out the reaction (8S)-3',8-cyclo-7,8-dihydroguanosine 5'-triphosphate = cyclic pyranopterin phosphate + diphosphate. It functions in the pathway cofactor biosynthesis; molybdopterin biosynthesis. Catalyzes the conversion of (8S)-3',8-cyclo-7,8-dihydroguanosine 5'-triphosphate to cyclic pyranopterin monophosphate (cPMP). The protein is Cyclic pyranopterin monophosphate synthase of Salmonella arizonae (strain ATCC BAA-731 / CDC346-86 / RSK2980).